Consider the following 178-residue polypeptide: Large ribosomal subunit protein bL25 (178 aa).

It belongs to the bacterial ribosomal protein bL25 family. CTC subfamily. As to quaternary structure, part of the 50S ribosomal subunit; part of the 5S rRNA/L5/L18/L25 subcomplex. Contacts the 5S rRNA. Binds to the 5S rRNA independently of L5 and L18.

Functionally, this is one of the proteins that binds to the 5S RNA in the ribosome where it forms part of the central protuberance. The chain is Large ribosomal subunit protein bL25 from Helicobacter pylori (strain G27).